A 113-amino-acid chain; its full sequence is Putative membrane protein insertion efficiency factor (113 aa).

The protein belongs to the UPF0161 family.

It is found in the cell inner membrane. Functionally, could be involved in insertion of integral membrane proteins into the membrane. This Campylobacter jejuni subsp. doylei (strain ATCC BAA-1458 / RM4099 / 269.97) protein is Putative membrane protein insertion efficiency factor.